Here is a 263-residue protein sequence, read N- to C-terminus: Small ribosomal subunit protein eS1 (263 aa).

The span at 236-254 (GDGKGGSDEPGARVDRPEG) shows a compositional bias: basic and acidic residues. Positions 236 to 263 (GDGKGGSDEPGARVDRPEGYEPPVQETV) are disordered.

This sequence belongs to the eukaryotic ribosomal protein eS1 family. Component of the small ribosomal subunit. Mature ribosomes consist of a small (40S) and a large (60S) subunit. The 40S subunit contains about 33 different proteins and 1 molecule of RNA (18S). The 60S subunit contains about 49 different proteins and 3 molecules of RNA (28S, 5.8S and 5S).

The protein resides in the cytoplasm. The chain is Small ribosomal subunit protein eS1 from Periplaneta americana (American cockroach).